A 62-amino-acid polypeptide reads, in one-letter code: Keratin-associated protein 8-1 (62 aa).

The tract at residues 12–53 is 12 X 2 AA repeats of G-[YCGS]; the sequence is GCYWGSYGYPLGYSVGCGYGSTYSPVGYGFGYGYNGSGAFGC.

This sequence belongs to the KRTAP type 8 family. Interacts with wool keratins. Wool.

Its function is as follows. In the wool cortex, wool keratin intermediate filaments are embedded in an interfilamentous matrix, consisting of hair keratin-associated proteins (KRTAP), which are essential for the formation of a rigid and resistant wool shaft through their extensive disulfide bond cross-linking with abundant cysteine residues of wool keratins. The matrix proteins include the high-sulfur and high-glycine-tyrosine keratins. The protein is Keratin-associated protein 8-1 (KRTAP8-1) of Ovis aries (Sheep).